The primary structure comprises 537 residues: Probable feruloyl esterase ARB_07085 (537 aa).

A signal peptide spans 1-22 (MVTLPLLLSILPLAAVFSSAAS). N-linked (GlcNAc...) asparagine glycans are attached at residues Asn-67, Asn-76, and Asn-189. Disulfide bonds link Cys-196-Cys-459, Cys-263-Cys-280, and Cys-508-Cys-529. Ser-197 functions as the Acyl-ester intermediate in the catalytic mechanism. Asp-264, Asp-267, Val-269, Asp-271, and Val-273 together coordinate Ca(2+). Residue Asn-339 is glycosylated (N-linked (GlcNAc...) asparagine). Active-site charge relay system residues include Asp-419 and His-458.

Belongs to the tannase family.

The protein localises to the secreted. The catalysed reaction is feruloyl-polysaccharide + H2O = ferulate + polysaccharide.. Functionally, hydrolyzes the feruloyl-arabinose ester bond in arabinoxylans as well as the feruloyl-galactose and feruloyl-arabinose ester bonds. The chain is Probable feruloyl esterase ARB_07085 from Arthroderma benhamiae (strain ATCC MYA-4681 / CBS 112371) (Trichophyton mentagrophytes).